The chain runs to 814 residues: Echinoderm microtubule-associated protein-like 1 (814 aa).

Positions 31-72 form a coiled coil; it reads SMEISDRIASLEQRVQMQEDDIQLLKSALADVVRRLNITEEQ. The disordered stretch occupies residues 77 to 185; that stretch reads NRKGPTKARP…EPTFSPEEGY (109 aa). A compositionally biased stretch (polar residues) spans 92–101; the sequence is PLRTTVNNGT. A compositionally biased stretch (low complexity) spans 103 to 115; that stretch reads LPKKPSASLPSPS. The residue at position 113 (Ser113) is a Phosphoserine. Residues 127-137 show a composition bias toward polar residues; it reads KSINRTSSSER. Basic and acidic residues predominate over residues 142–152; it reads GRRESSGDSKG. The span at 155-167 shows a compositional bias: low complexity; sequence NRTGSTSSSSSGK. Positions 175-814 are tandem atypical propeller in EMLs; the sequence is KEPTFSPEEG…DTSIMQWRVI (640 aa). WD repeat units lie at residues 260–309, 314–357, 362–399, 408–445, 449–488, 492–529, 534–571, 577–612, 616–654, 663–700, 708–767, and 774–813; these read EQLQ…IWDS, TLHV…VWDW, RLAD…FWTL, QGLF…VWGK, RISY…SWNG, KLHK…LQGT, FTPI…LWDA, VWDK…VFDT, DLVT…IYGV, RVGK…YWVP, SVET…LFSY, and APSH…QWRV.

It belongs to the WD repeat EMAP family. In terms of assembly, homotrimer; self-association is mediated by the N-terminal coiled coil. Does not interact with EML3. Binds repolymerizing microtubules. Binds unpolymerized tubulins via its WD repeat region. Interacts with TASOR.

The protein resides in the cytoplasm. It is found in the perinuclear region. The protein localises to the cytoskeleton. Modulates the assembly and organization of the microtubule cytoskeleton, and probably plays a role in regulating the orientation of the mitotic spindle and the orientation of the plane of cell division. Required for normal proliferation of neuronal progenitor cells in the developing brain and for normal brain development. Does not affect neuron migration per se. In Rattus norvegicus (Rat), this protein is Echinoderm microtubule-associated protein-like 1 (Eml1).